The primary structure comprises 136 residues: General odorant-binding protein 57d (136 aa).

Residues 1–29 (MPEKMSLRLVPHLACIIFILEIQFRIADS) form the signal peptide. 3 cysteine pairs are disulfide-bonded: Cys-33/Cys-70, Cys-66/Cys-118, and Cys-107/Cys-127.

The protein belongs to the PBP/GOBP family.

Its function is as follows. Present in the aqueous fluid surrounding olfactory sensory dendrites and are thought to aid in the capture and transport of hydrophobic odorants into and through this fluid. In Drosophila melanogaster (Fruit fly), this protein is General odorant-binding protein 57d.